A 310-amino-acid chain; its full sequence is Carbamate kinase (310 aa).

Belongs to the carbamate kinase family. In terms of assembly, homodimer.

Its subcellular location is the cytoplasm. The catalysed reaction is hydrogencarbonate + NH4(+) + ATP = carbamoyl phosphate + ADP + H2O + H(+). Its pathway is amino-acid degradation; L-arginine degradation via ADI pathway. The chain is Carbamate kinase from Haemophilus influenzae (strain ATCC 51907 / DSM 11121 / KW20 / Rd).